The chain runs to 523 residues: Transmembrane protein 266 (523 aa).

Over 1-94 (MTNPQPAIEG…VFLLSASLNS (94 aa)) the chain is Cytoplasmic. A helical transmembrane segment spans residues 95–115 (FLVACVILVVILLTLELLIDI). At 116 to 121 (KLLQFS) the chain is on the extracellular side. A helical transmembrane segment spans residues 122-142 (SAFQFAGVIHWISLVILSVFF). The Cytoplasmic portion of the chain corresponds to 143 to 161 (SETVLRIVVLGIWDYIENK). Residues 162-182 (IEVFDGAVIILSLAPMVASTV) traverse the membrane as a helical segment. Residues 183-191 (ANGPRSPWD) lie on the Extracellular side of the membrane. Residues 192–212 (AISLIIMLRIWRVKRVIDAYV) traverse the membrane as a helical segment. Topologically, residues 213–523 (LPVKLEMEMV…EQKLHRVPEA (311 aa)) are cytoplasmic. The stretch at 218–270 (EMEMVIQQYEKAKVIQDEQLERLTQICQEQGFEIRQLRAHLAQQDLDLAAERE) forms a coiled coil. Residues 380–477 (SASRSSVTRA…PELEHRVSLF (98 aa)) are disordered. Residues 382–397 (SRSSVTRAQSDSSQTL) are compositionally biased toward low complexity. A compositionally biased stretch (polar residues) spans 398–411 (GSSMDCSTAREEPS). Pro residues predominate over residues 421–430 (LPSQQQVEEA).

Homodimer; disulfide-linked. Mainly expressed in the cerebellum. Also expressed in cerebral cortex, skeletal muscle and thyroid, but at much lower levels.

Its subcellular location is the cell membrane. It localises to the cell projection. The protein localises to the dendrite. The protein resides in the perikaryon. Voltage-sensor protein present on the post-synaptic side of glutamatergic mossy fibers and granule cells in the cerebellum. Despite the presence of a voltage-sensor segment, does not form a functional ion channel and its precise role remains unclear. Undergoes both rapid and slow structural rearrangements in response to changes in voltage. Contains a zinc-binding site that can regulate the slow conformational transition. The polypeptide is Transmembrane protein 266 (Homo sapiens (Human)).